A 1582-amino-acid chain; its full sequence is Sca1 complex scaffold protein scaA (1582 aa).

Low complexity-rich tracts occupy residues Met-1–Thr-14 and Leu-109–Thr-131. Disordered stretches follow at residues Met-1 to Lys-22 and Gly-108 to Lys-147. The stretch at Leu-4 to Gly-37 is one TPR 1 repeat. The stretch at Ile-166–Ile-199 is one TPR 2 repeat. The segment at Ile-246–Val-349 is disordered. Composition is skewed to polar residues over residues Thr-249–Arg-267, Asn-288–Ile-310, and Ser-318–Gly-332. Ser-359 carries the phosphoserine; by PKB modification. The gefA and gefH binding stretch occupies residues Arg-400–Gly-600. Disordered regions lie at residues Pro-468 to Gly-493 and Ser-686 to Lys-734. 2 stretches are compositionally biased toward gly residues: residues Gly-478–Gly-493 and Gln-694–Ser-714. Positions Gly-715 to Gly-726 are enriched in low complexity. The stretch at Met-742–Leu-777 is one TPR 3 repeat. Residues Gly-864–Ile-875 show a composition bias toward gly residues. The disordered stretch occupies residues Gly-864–Pro-978. Low complexity predominate over residues His-903 to Gly-928. Over residues Asn-940–Leu-953 the composition is skewed to polar residues. Positions Gly-960–Ser-972 are enriched in low complexity. A pppA and pho2B binding region spans residues Phe-1000–Asn-1400. The stretch at Thr-1080–Val-1113 is one TPR 4 repeat.

Component of the Sca1 complex composed of at least gefA, gefH, scaA, phr, and the protein phosphatase 2A subunits pppA and pho2B. In terms of processing, phosphorylated at Ser-359 by PKB and PKBR1 is induced by chemoattractant.

It is found in the cell membrane. In terms of biological role, component of the Sca1 complex, a regulator of cell motility, chemotaxis and signal relay. The Sca1 complex is recruited to the plasma membrane in a chemoattractant- and F-actin-dependent manner and is enriched at the leading edge of chemotaxing cells where it regulates F-actin dynamics and signal relay by controlling the activation of rasC and the downstream target of rapamycin complex 2 (TORC2)-Akt/protein kinase B (PKB) pathway. ScaA acts as a molecular scaffold, bringing together gefA, gefH and phr with PP2A. The polypeptide is Sca1 complex scaffold protein scaA (Dictyostelium discoideum (Social amoeba)).